The chain runs to 187 residues: Ribose 1,5-bisphosphate phosphokinase PhnN (187 aa).

9 to 16 (GPSGSGKD) lines the ATP pocket.

Belongs to the ribose 1,5-bisphosphokinase family.

The catalysed reaction is alpha-D-ribose 1,5-bisphosphate + ATP = 5-phospho-alpha-D-ribose 1-diphosphate + ADP. Its pathway is metabolic intermediate biosynthesis; 5-phospho-alpha-D-ribose 1-diphosphate biosynthesis; 5-phospho-alpha-D-ribose 1-diphosphate from D-ribose 5-phosphate (route II): step 3/3. In terms of biological role, catalyzes the phosphorylation of ribose 1,5-bisphosphate to 5-phospho-D-ribosyl alpha-1-diphosphate (PRPP). The chain is Ribose 1,5-bisphosphate phosphokinase PhnN from Desulfomicrobium baculatum (strain DSM 4028 / VKM B-1378 / X) (Desulfovibrio baculatus).